Consider the following 463-residue polypeptide: Glutamate--tRNA ligase 2 (463 aa).

The 'HIGH' region signature appears at 10–20 (PSPTGYLHIGG). The 'KMSKS' region signature appears at 238–242 (KLSKR). Residue Lys-241 coordinates ATP.

The protein belongs to the class-I aminoacyl-tRNA synthetase family. Glutamate--tRNA ligase type 1 subfamily. As to quaternary structure, monomer.

The protein localises to the cytoplasm. The enzyme catalyses tRNA(Glu) + L-glutamate + ATP = L-glutamyl-tRNA(Glu) + AMP + diphosphate. Functionally, catalyzes the attachment of glutamate to tRNA(Glu) in a two-step reaction: glutamate is first activated by ATP to form Glu-AMP and then transferred to the acceptor end of tRNA(Glu). This is Glutamate--tRNA ligase 2 from Helicobacter acinonychis (strain Sheeba).